A 183-amino-acid chain; its full sequence is Fetal and adult testis-expressed transcript protein (183 aa).

The interval 42–66 (SRSRGASQKKQKLEQKAAGSASAKR) is disordered. Residues 163-181 (TLIIAVLVSASIANLWLWM) form a helical membrane-spanning segment.

In terms of assembly, interacts with BIK and RNF183. Interacts with IMMT/MIC60and EMD. In terms of tissue distribution, testis-specific in fetus (aged from 6 to 11 weeks). In adult, expressed predominantly in testis, with some expression in lung, heart, kidney, adrenal gland and whole brain. Highly expressed in certain types of cancer tissues such as hepatocellular carcinoma, colon and gastric cancer. Weakly expressed in normal pancreas.

It localises to the mitochondrion. Its subcellular location is the mitochondrion outer membrane. It is found in the endoplasmic reticulum membrane. Functionally, involved in the regulation of endoplasmic reticulum (ER)-mitochondria coupling. Negatively regulates the ER-mitochondria distance and Ca(2+) transfer from ER to mitochondria possibly implicating it in the regulation of apoptosis. May collaborate with RNF183 to restrain BIK protein levels thus regulating apoptotic signaling. This is Fetal and adult testis-expressed transcript protein (FATE1) from Homo sapiens (Human).